The chain runs to 607 residues: Rap1 GTPase-GDP dissociation stimulator 1 (607 aa).

ARM repeat units lie at residues 89–131 (GLIS…DQAG) and 170–211 (DSLQ…NLAE). The tract at residues 122 to 170 (EGRSAVDQAGGAQIVIDHLRSLCGRTDPASEKLMTVFCGMLMNYSNEND) is prevents binding to prenylated RHOA. The residue at position 230 (Lys230) is an N6-acetyllysine. 3 ARM repeats span residues 347 to 390 (DGNC…NLAI), 391 to 431 (PVVN…MLID), and 479 to 519 (SKDV…LIAA).

In terms of assembly, interacts with RABL3. Interacts with RHOT1. As to quaternary structure, interacts with unprenylated RHOA; the interaction is direct. Interacts with RAP1A. Interacts with KRAS. Interacts with RAC1. Interacts with RAP1B. Preferentially interacts with unprenylated GTPases that will become geranylgeranylated. May also interact with prenylated GTPases. Interacts with prenylated RHOA; the interaction is direct and in a 1:1 stoichiometry. Interacts with RAP1A. Interacts with KRAS. Interacts with RAC1. Interacts with RAP1B. Preferentially interacts with prenylated GTPases. In terms of processing, serotonylated on Gln residues by TGM2 in response to hypoxia, leading to its inactivation.

It localises to the cytoplasm. It is found in the cytosol. The protein resides in the endoplasmic reticulum. Its subcellular location is the mitochondrion. The protein localises to the nucleus. Its function is as follows. Acts as a GEF (guanine nucleotide exchange factor) for the Rho family of small GTP-binding proteins (G proteins) that stimulates the dissociation of GDP to enable subsequent binding of GTP. Additionally, appears to chaperone the processing and/or trafficking of small GTPases containing a C-terminal polybasic region independently of GEF activity. Targets include RAP1A/RAP1B, RHOA, RHOB, RHOC, RAC1 and KRAS. Regulates mitochondrial dynamics by controlling RHOT function to promote mitochondrial fission during high calcium conditions. Able to promote the Ca(2+) release from the endoplasmic reticulum via both inositol trisphosphate (Ins3P) and ryanodine sensitive receptors leading to a enhanced mitochondrial Ca(2+) uptake. In terms of biological role, acts as a GEF (guanine nucleotide exchange factor) for unprenylated RHOA. Chaperones the entry and passage of small GTPases through the prenylation pathway. Recognizes the last amino acid in the GTPase C-terminal CAAX motif with a preference for 'Leu' over 'Met', indicating involvement in the geranylgeranylation pathway. May also recognize prenylated GTPases. Functionally, acts as a GEF (guanine nucleotide exchange factor) for prenylated RHOA. Acts as a GEF for RHOC. Chaperones the downstream trafficking and/or processing of small newly prenylated GTPases. Escorts RAC1 to the nucleus. This Mus musculus (Mouse) protein is Rap1 GTPase-GDP dissociation stimulator 1.